Reading from the N-terminus, the 356-residue chain is Protein RecA (356 aa).

G68–T75 is an ATP binding site.

It belongs to the RecA family.

It is found in the cytoplasm. Can catalyze the hydrolysis of ATP in the presence of single-stranded DNA, the ATP-dependent uptake of single-stranded DNA by duplex DNA, and the ATP-dependent hybridization of homologous single-stranded DNAs. It interacts with LexA causing its activation and leading to its autocatalytic cleavage. This chain is Protein RecA, found in Thermotoga maritima (strain ATCC 43589 / DSM 3109 / JCM 10099 / NBRC 100826 / MSB8).